We begin with the raw amino-acid sequence, 339 residues long: Glycerol-3-phosphate dehydrogenase [NAD(P)+] (339 aa).

Residues Ser-15, Trp-16, His-36, and Lys-110 each coordinate NADPH. The sn-glycerol 3-phosphate site is built by Lys-110, Gly-144, and Ser-146. Ala-148 serves as a coordination point for NADPH. 5 residues coordinate sn-glycerol 3-phosphate: Lys-199, Asp-252, Ser-262, Arg-263, and Asn-264. Lys-199 serves as the catalytic Proton acceptor. Residue Arg-263 coordinates NADPH. Residues Val-287 and Glu-289 each coordinate NADPH.

This sequence belongs to the NAD-dependent glycerol-3-phosphate dehydrogenase family.

It localises to the cytoplasm. It catalyses the reaction sn-glycerol 3-phosphate + NAD(+) = dihydroxyacetone phosphate + NADH + H(+). The catalysed reaction is sn-glycerol 3-phosphate + NADP(+) = dihydroxyacetone phosphate + NADPH + H(+). It participates in membrane lipid metabolism; glycerophospholipid metabolism. Its function is as follows. Catalyzes the reduction of the glycolytic intermediate dihydroxyacetone phosphate (DHAP) to sn-glycerol 3-phosphate (G3P), the key precursor for phospholipid synthesis. The chain is Glycerol-3-phosphate dehydrogenase [NAD(P)+] from Desulfotalea psychrophila (strain LSv54 / DSM 12343).